The primary structure comprises 300 residues: Protoheme IX farnesyltransferase (300 aa).

9 helical membrane passes run 24-44 (VTQL…PGMV), 48-68 (VLIG…AINC), 94-114 (PQIL…LYTF), 118-138 (LTMW…TLLL), 146-166 (IVIG…AVTG), 172-192 (AWIL…VLAL), 217-237 (LHIL…FISG), 239-259 (SGAV…AYAW), and 278-298 (IVYL…RPLL).

The protein belongs to the UbiA prenyltransferase family. Protoheme IX farnesyltransferase subfamily.

The protein localises to the cell inner membrane. The catalysed reaction is heme b + (2E,6E)-farnesyl diphosphate + H2O = Fe(II)-heme o + diphosphate. It functions in the pathway porphyrin-containing compound metabolism; heme O biosynthesis; heme O from protoheme: step 1/1. Functionally, converts heme B (protoheme IX) to heme O by substitution of the vinyl group on carbon 2 of heme B porphyrin ring with a hydroxyethyl farnesyl side group. This Burkholderia vietnamiensis (strain G4 / LMG 22486) (Burkholderia cepacia (strain R1808)) protein is Protoheme IX farnesyltransferase.